The chain runs to 236 residues: 2-C-methyl-D-erythritol 4-phosphate cytidylyltransferase (236 aa).

The protein belongs to the IspD/TarI cytidylyltransferase family. IspD subfamily.

The catalysed reaction is 2-C-methyl-D-erythritol 4-phosphate + CTP + H(+) = 4-CDP-2-C-methyl-D-erythritol + diphosphate. The protein operates within isoprenoid biosynthesis; isopentenyl diphosphate biosynthesis via DXP pathway; isopentenyl diphosphate from 1-deoxy-D-xylulose 5-phosphate: step 2/6. Its function is as follows. Catalyzes the formation of 4-diphosphocytidyl-2-C-methyl-D-erythritol from CTP and 2-C-methyl-D-erythritol 4-phosphate (MEP). In Burkholderia multivorans (strain ATCC 17616 / 249), this protein is 2-C-methyl-D-erythritol 4-phosphate cytidylyltransferase.